The following is a 541-amino-acid chain: Solute carrier family 22 member 10 (541 aa).

The Cytoplasmic segment spans residues 1 to 15 (MAFEELLSQVGGLGR). Residues 16–36 (FQMLHLVFILPSLMLLIPHIL) traverse the membrane as a helical segment. Topologically, residues 37 to 145 (LENFAAAIPG…DLVCDYQSLK (109 aa)) are extracellular. N-linked (GlcNAc...) asparagine glycans are attached at residues Asn-56 and Asn-102. The chain crosses the membrane as a helical span at residues 146-166 (SVVQFLLLTGMLVGGIIGGHV). At 167 to 193 (SDRFGRRFILRWCLLQLAITDTCAAFA) the chain is on the cytoplasmic side. A helical membrane pass occupies residues 194–214 (PTFPVYCVLRFLAGFSSMIII). At 215-230 (SNNSLPITEWIRPNSK) the chain is on the extracellular side. Residues 231 to 251 (ALVVILSSGALSIGQIILGGL) traverse the membrane as a helical segment. The Cytoplasmic portion of the chain corresponds to 252–259 (AYVFRDWQ). A helical transmembrane segment spans residues 260–280 (TLHVVASVPFFVFFLLSRWLV). The Extracellular segment spans residues 281–349 (ESARWLIITN…LFRNPSMRKR (69 aa)). A helical membrane pass occupies residues 350 to 370 (ICILVFLRFANTIPFYGTMVN). The Cytoplasmic segment spans residues 371–377 (LQHVGSN). The chain crosses the membrane as a helical span at residues 378 to 398 (IFLLQVLYGAVALIVRCLALL). Topologically, residues 399 to 406 (TLNHMGRR) are extracellular. Residues 407–427 (ISQILFMFLVGLSILANTFVP) form a helical membrane-spanning segment. At 428–436 (KEMQTLRVA) the chain is on the cytoplasmic side. A helical transmembrane segment spans residues 437–457 (LACLGIGCSAATFSSVAVHFI). Over 458 to 472 (ELIPTVLRARASGID) the chain is Extracellular. The helical transmembrane segment at 473 to 493 (LTASRIGAALAPLLMTLTVFF) threads the bilayer. Residues 494-495 (TT) are Cytoplasmic-facing. A helical transmembrane segment spans residues 496 to 516 (LPWIIYGIFPIIGGLIVFLLP). The Extracellular portion of the chain corresponds to 517 to 541 (ETKNLPLPDTIKDVENQKKNLKEKA).

It belongs to the major facilitator (TC 2.A.1) superfamily. Organic cation transporter (TC 2.A.1.19) family. Detected in fetal and adult liver, and in adult kidney.

The protein localises to the membrane. The chain is Solute carrier family 22 member 10 (SLC22A10) from Homo sapiens (Human).